Consider the following 417-residue polypeptide: MLFMEDDEQIRRYEFKRALEELSKLHGRGTELISLYIPPDKQISDVVAYLRDEYSTSSNIKSKSTRKNVLAAIESIMARLKYYKTPPPNGFVFFEGHIATRGDQTEMYTKIIEPPEPITTFMYKCDSEFHLEMLKTMLEEKEIYGLIVIDRKEATVGFLNGTRIEVVDNVQSQVPSKHHQGGQSSRRFERLIEIAANEFFKKVGEIANNAFMPKIKDIRAIFLGGPGATKEYFFEKDYLRNEVKEKIKDLFDVGYTDESGLRELVEKASESIKDMKISKEKDLMNRFLREVRKPDGGLAIYGEQAIRDALEQKMVDLLLISEGLRKVRYTYRCPTCQAELTLNQEPNEWPVCEKDGTPMELVAEDDFIEDLYRLAKESGAQVEIISDQSEEGKLLKQAFGGMAAVLRFIRKDNVQMM.

It belongs to the eukaryotic release factor 1 family. Heterodimer of two subunits, one of which binds GTP.

The protein localises to the cytoplasm. In terms of biological role, directs the termination of nascent peptide synthesis (translation) in response to the termination codons UAA, UAG and UGA. The chain is Peptide chain release factor subunit 1 (prf1) from Thermoplasma acidophilum (strain ATCC 25905 / DSM 1728 / JCM 9062 / NBRC 15155 / AMRC-C165).